We begin with the raw amino-acid sequence, 164 residues long: MSTPARRRLMRDFKRMKEDSPPGVSASPLPDNVMIWNAMIIGPADTPYEDGTFRLLLEFDEEYPNKPPHVKFLSEMFHPNVYANGEICLDILQNRWTPTYDVASILTSIQSLFNDPNPASPANVEAATLFQDHKSQYVKRVKETVEKSWEDDMEDMADEDEDEE.

Residues 4 to 150 (PARRRLMRDF…VKETVEKSWE (147 aa)) form the UBC core domain. The active-site Glycyl thioester intermediate is the C88.

This sequence belongs to the ubiquitin-conjugating enzyme family.

Its subcellular location is the cytoplasm. It localises to the nucleus. It carries out the reaction S-ubiquitinyl-[E1 ubiquitin-activating enzyme]-L-cysteine + [E2 ubiquitin-conjugating enzyme]-L-cysteine = [E1 ubiquitin-activating enzyme]-L-cysteine + S-ubiquitinyl-[E2 ubiquitin-conjugating enzyme]-L-cysteine.. Its pathway is protein modification; protein ubiquitination. Its function is as follows. Catalyzes the covalent attachment of ubiquitin to other proteins. Plays a role in transcription regulation by catalyzing the monoubiquitination of histone H2B to form H2BK123ub1. H2BK123ub1 gives a specific tag for epigenetic transcriptional activation and is also a prerequisite for H3K4me and H3K79me formation. Also involved in postreplication repair of UV-damaged DNA, in N-end rule-dependent protein degradation and in sporulation. In Kluyveromyces lactis (strain ATCC 8585 / CBS 2359 / DSM 70799 / NBRC 1267 / NRRL Y-1140 / WM37) (Yeast), this protein is Ubiquitin-conjugating enzyme E2 2 (UBC2).